A 347-amino-acid polypeptide reads, in one-letter code: MKEMNICGINKNWVLPEAQENNVKKFLPRPLSRVNGWSPPLHSFQAISWITYLAMSIVTFGIFIPFLPYSWKYAANIVMGGVFIFHLIVHLIAITIDPADTNVRLKKDYTQPVPAFDRSKHTHVIQNQYCHLCEVTASKKAKHCSACNKCVSGFDHHCKWLNNCVGRRNYWFFFWSVASAAVGILGVMIILCYICIQYFVNPDELRTDPLYKEIISENTWLLFLSLWPVPVKTPIVLSIAVMALLLAIASFVMLGHLLIFHLYLITKNMSTFDYLMKTRFKKNLHPAEEKELPLQKKGDLPQEKSDNWAWPKSPPRVGSQKFPVSTLSPKSSVCFVASPPKICHSED.

Residues Met-1 to Ala-46 lie on the Cytoplasmic side of the membrane. A helical transmembrane segment spans residues Ile-47–Leu-67. At Pro-68–Ala-75 the chain is on the lumenal side. The chain crosses the membrane as a helical span at residues Asn-76–Ile-96. The Cytoplasmic segment spans residues Asp-97–Tyr-170. Residues Gln-128–Ala-178 form the DHHC domain. Catalysis depends on Cys-158, which acts as the S-palmitoyl cysteine intermediate. The helical transmembrane segment at Trp-171–Leu-191 threads the bilayer. The Lumenal portion of the chain corresponds to Cys-192–Pro-234. Residues Ile-235 to Gly-255 form a helical membrane-spanning segment. Over His-256 to Asp-347 the chain is Cytoplasmic. The segment covering Glu-291–Asp-306 has biased composition (basic and acidic residues). Residues Glu-291–Ser-332 form a disordered region. Over residues Phe-322–Ser-331 the composition is skewed to polar residues.

Belongs to the DHHC palmitoyltransferase family. As to quaternary structure, interacts with IRF3 and STING1; in presence of DNA viruses recruits IRF3 to STING1 promoting IRF3 phosphorylation and activation.

It localises to the endosome membrane. The catalysed reaction is L-cysteinyl-[protein] + hexadecanoyl-CoA = S-hexadecanoyl-L-cysteinyl-[protein] + CoA. Functionally, endoplasmic reticulum-localized palmitoyltransferase that could catalyze the addition of palmitate onto various protein substrates and be involved in a variety of cellular processes. Has a palmitoyltransferase activity toward NCDN and regulates NCDN association with endosome membranes through this palmitoylation. May play a role in cell proliferation. Also has a palmitoyltransferase activity-independent function in DNA virus-triggered and CGAS-mediated innate immune response. Functions as an adapter that recruits IRF3 to STING1 to promote the activation of that key transcriptional regulator of type I interferon (IFN)-dependent immune response. This chain is Palmitoyltransferase ZDHHC11, found in Mus musculus (Mouse).